A 196-amino-acid chain; its full sequence is N-(5'-phosphoribosyl)anthranilate isomerase (196 aa).

Belongs to the TrpF family.

It catalyses the reaction N-(5-phospho-beta-D-ribosyl)anthranilate = 1-(2-carboxyphenylamino)-1-deoxy-D-ribulose 5-phosphate. Its pathway is amino-acid biosynthesis; L-tryptophan biosynthesis; L-tryptophan from chorismate: step 3/5. This chain is N-(5'-phosphoribosyl)anthranilate isomerase, found in Nitratiruptor sp. (strain SB155-2).